The sequence spans 1392 residues: DNA-directed RNA polymerase subunit beta (1392 aa).

The segment at 1372-1392 (LSSYAEEDPDEGPEALPEAAE) is disordered.

This sequence belongs to the RNA polymerase beta chain family. The RNAP catalytic core consists of 2 alpha, 1 beta, 1 beta' and 1 omega subunit. When a sigma factor is associated with the core the holoenzyme is formed, which can initiate transcription.

The catalysed reaction is RNA(n) + a ribonucleoside 5'-triphosphate = RNA(n+1) + diphosphate. Its function is as follows. DNA-dependent RNA polymerase catalyzes the transcription of DNA into RNA using the four ribonucleoside triphosphates as substrates. This is DNA-directed RNA polymerase subunit beta from Sphingopyxis alaskensis (strain DSM 13593 / LMG 18877 / RB2256) (Sphingomonas alaskensis).